Here is a 981-residue protein sequence, read N- to C-terminus: Bifunctional glutamine synthetase adenylyltransferase/adenylyl-removing enzyme (981 aa).

An adenylyl removase region spans residues 1–473; the sequence is MTMPLPSIEQ…RSVFNNLIGF (473 aa). Positions 479–981 are adenylyl transferase; the sequence is ADDSDNAWSD…HQIWQKLFFE (503 aa).

This sequence belongs to the GlnE family. Mg(2+) serves as cofactor.

It carries out the reaction [glutamine synthetase]-O(4)-(5'-adenylyl)-L-tyrosine + phosphate = [glutamine synthetase]-L-tyrosine + ADP. The enzyme catalyses [glutamine synthetase]-L-tyrosine + ATP = [glutamine synthetase]-O(4)-(5'-adenylyl)-L-tyrosine + diphosphate. Its function is as follows. Involved in the regulation of glutamine synthetase GlnA, a key enzyme in the process to assimilate ammonia. When cellular nitrogen levels are high, the C-terminal adenylyl transferase (AT) inactivates GlnA by covalent transfer of an adenylyl group from ATP to specific tyrosine residue of GlnA, thus reducing its activity. Conversely, when nitrogen levels are low, the N-terminal adenylyl removase (AR) activates GlnA by removing the adenylyl group by phosphorolysis, increasing its activity. The regulatory region of GlnE binds the signal transduction protein PII (GlnB) which indicates the nitrogen status of the cell. The sequence is that of Bifunctional glutamine synthetase adenylyltransferase/adenylyl-removing enzyme from Mannheimia succiniciproducens (strain KCTC 0769BP / MBEL55E).